Reading from the N-terminus, the 299-residue chain is Probable lipid kinase YegS (299 aa).

The 132-residue stretch at 2-133 folds into the DAGKc domain; it reads ANFPDSLLIL…IDMARVNDKT (132 aa). Residues threonine 40, 66-72, and threonine 95 each bind ATP; that span reads GDGTINE. Mg(2+)-binding residues include leucine 215, aspartate 218, and leucine 220. The active-site Proton acceptor is glutamate 271.

Belongs to the diacylglycerol/lipid kinase family. YegS lipid kinase subfamily. Mg(2+) serves as cofactor. The cofactor is Ca(2+).

Its subcellular location is the cytoplasm. In terms of biological role, probably phosphorylates lipids; the in vivo substrate is unknown. The sequence is that of Probable lipid kinase YegS from Salmonella arizonae (strain ATCC BAA-731 / CDC346-86 / RSK2980).